The primary structure comprises 121 residues: Flagellar hook-basal body complex protein FliE (121 aa).

The protein belongs to the FliE family.

Its subcellular location is the bacterial flagellum basal body. The protein is Flagellar hook-basal body complex protein FliE of Saccharophagus degradans (strain 2-40 / ATCC 43961 / DSM 17024).